Consider the following 504-residue polypeptide: Aspartyl/glutamyl-tRNA(Asn/Gln) amidotransferase subunit B (504 aa).

This sequence belongs to the GatB/GatE family. GatB subfamily. In terms of assembly, heterotrimer of A, B and C subunits.

The enzyme catalyses L-glutamyl-tRNA(Gln) + L-glutamine + ATP + H2O = L-glutaminyl-tRNA(Gln) + L-glutamate + ADP + phosphate + H(+). The catalysed reaction is L-aspartyl-tRNA(Asn) + L-glutamine + ATP + H2O = L-asparaginyl-tRNA(Asn) + L-glutamate + ADP + phosphate + 2 H(+). Allows the formation of correctly charged Asn-tRNA(Asn) or Gln-tRNA(Gln) through the transamidation of misacylated Asp-tRNA(Asn) or Glu-tRNA(Gln) in organisms which lack either or both of asparaginyl-tRNA or glutaminyl-tRNA synthetases. The reaction takes place in the presence of glutamine and ATP through an activated phospho-Asp-tRNA(Asn) or phospho-Glu-tRNA(Gln). This Tropheryma whipplei (strain TW08/27) (Whipple's bacillus) protein is Aspartyl/glutamyl-tRNA(Asn/Gln) amidotransferase subunit B.